The sequence spans 613 residues: tRNA 5-methylaminomethyl-2-thiouridine biosynthesis bifunctional protein MnmC (613 aa).

Residues 1-225 form a tRNA (mnm(5)s(2)U34)-methyltransferase region; the sequence is MKKAKLIFKD…KREMIKAYLE (225 aa). The tract at residues 252–613 is FAD-dependent cmnm(5)s(2)U34 oxidoreductase; the sequence is IGAGISSAVL…FLIRKLKKGL (362 aa).

This sequence in the N-terminal section; belongs to the methyltransferase superfamily. tRNA (mnm(5)s(2)U34)-methyltransferase family. The protein in the C-terminal section; belongs to the DAO family. Requires FAD as cofactor.

It localises to the cytoplasm. The enzyme catalyses 5-aminomethyl-2-thiouridine(34) in tRNA + S-adenosyl-L-methionine = 5-methylaminomethyl-2-thiouridine(34) in tRNA + S-adenosyl-L-homocysteine + H(+). Functionally, catalyzes the last two steps in the biosynthesis of 5-methylaminomethyl-2-thiouridine (mnm(5)s(2)U) at the wobble position (U34) in tRNA. Catalyzes the FAD-dependent demodification of cmnm(5)s(2)U34 to nm(5)s(2)U34, followed by the transfer of a methyl group from S-adenosyl-L-methionine to nm(5)s(2)U34, to form mnm(5)s(2)U34. This Campylobacter jejuni (strain RM1221) protein is tRNA 5-methylaminomethyl-2-thiouridine biosynthesis bifunctional protein MnmC.